The chain runs to 200 residues: Small ribosomal subunit protein uS4c (200 aa).

An S4 RNA-binding domain is found at 90 to 150; that stretch reads MRLDNIIFRL…NRKESVIIKN (61 aa).

It belongs to the universal ribosomal protein uS4 family. As to quaternary structure, part of the 30S ribosomal subunit. Contacts protein S5. The interaction surface between S4 and S5 is involved in control of translational fidelity.

It localises to the plastid. The protein resides in the chloroplast. One of the primary rRNA binding proteins, it binds directly to 16S rRNA where it nucleates assembly of the body of the 30S subunit. In terms of biological role, with S5 and S12 plays an important role in translational accuracy. This chain is Small ribosomal subunit protein uS4c (rps4), found in Pellia neesiana (Liverwort).